The sequence spans 174 residues: uncharacterized protein (174 aa).

The interval 138 to 174 is disordered; sequence VNLTSKSSGRSDEEGTTRRAPVLKTRADFVSRKDKHR. A compositionally biased stretch (basic and acidic residues) spans 162-174; the sequence is TRADFVSRKDKHR.

This is an uncharacterized protein from Bos taurus (Bovine).